The sequence spans 2667 residues: eIF-2-alpha kinase activator GCN1 (2667 aa).

HEAT repeat units follow at residues 19–56 (DSFYSEIKELEKSIQSNKLSERKNTLTRINSIGKHELS), 95–132 (QWIFSLVQSLKQLFKDISSATNTSLVTDELKINIVKFT), 159–198 (SFSLVLLNYFIDQIQSNSDLTTLLFAAQELLYRELTLQHM), 293–330 (DLQSIILPPLSRHIKRDQDQVFKILIFILENLSSDFNV), 336–375 (LLKSMLLPMLLPVIQSTISIEENRKLLKKTFTLIIERSKD), 398–439 (SQKL…SISI), 466–503 (ELPEQTIKIITNSLKNDDDIIKGQVILSLSKSLGPEAN), and 794–832 (LLNEELVKLMVKALSYEPVLAITQQQWSIYHTLPTELFV). The segment at 842-879 (RNDRKVKPKTAEEQRDEESRKRIEEKKKIQSGELEKQE) is disordered. HEAT repeat units follow at residues 929 to 967 (PIIVALLQLMKHEITNHQFTQVFEKLICCVPSRFKLDRS), 985 to 1024 (LSEIQILGFIQKILTHIRESIAKEALSGFAFNYFWPIIKN), 1085 to 1122 (GVETSDIGELMEGIISKHVQVRSICLQAIEKIPSIYSP), 1199 to 1237 (HMIPEIVDNLFEIYEQNYPDEIRETPITSKFRISVATAL), 1290 to 1330 (GELL…HMDA), 1333 to 1370 (PKVSIVIDKLVDALSIPSESVQVGISKCIAQLIPSFKK), 1371 to 1407 (QGDRLIPMLLEKLKNSSGNYADRRGAAFGLAGSVKGL), 1412 to 1450 (LKNYSILDTLQSYIEDKKHPTSRQGALFAFECLCNTIGR), 1454 to 1491 (PYIIHILPKLLVCFGDNVSEVRDATADTAKAIMSQLSG), 1492 to 1529 (HGVKIVLPALLKALDDRSWRTKEGSIELLGAMAFCAPK), 1533 to 1570 (SCLPTIVPKLTYVLNDTHTKVQEAAKEALSHIGSVIRN), 1572 to 1608 (EIQIHVPLLLQTYDDPEIHSKELLENLLSTNYVHTID), 1610 to 1647 (ASLSLLLPILERTLKERSSELKKMSCQIVGNLCSLTEP), 1652 to 1689 (PYLNILMPVMKTVLLDPIPEVRAICARALGLLVRGMGE), 1691 to 1728 (NFSTLIPWLLETVKSDQGAVERSGAAQGLSEVLASLDI), 1729 to 1766 (SRFNSLINELLAMTNSPRPHVREGILSIFIFTPISLGD), 1770 to 1807 (PYLPKVLPQVLKGLADDSDPVREVCMRCGQSIVLQFAV), and 1809 to 1845 (GIEVIVPALEKVLFHENWRIRLSCVQLFGDLLFKLAG). The tract at residues 1853–1875 (SNNSSYNAKDDDDDEPGSSGNDI) is disordered. HEAT repeat units follow at residues 1882-1919 (ERLGRILSSLYMMRFDNNSSVRQKVLLIWKYIVSNTPK), 1923-1960 (EILPTLIEMIISSIGSNNVEKRQISAKTLGDIVSKLSD), 1962-1998 (ILPEILPILERGLRSELEETRQGVCIGLSEVISSAKT), 2002-2039 (PYLSSVVTCITKALCDPLIDVREAAAKAFDHLYHTFGS), 2040-2078 (KASNEILPQLIQLLDNSNNKDLAGYALDGLRQVILVRSS), 2080-2110 (VLPVLIPKLLSRPISTSNVTALSSLAADAGE), 2114-2152 (VHLSTIIPSLIESFTNPNTISNAKEIKEAAVSICKSIDE), 2154-2190 (GWDTLIGLLIEQTEIRLPNIRLGACELIGEFYNGNTM), 2193-2230 (EYPEELLLSLLSLFNDPDALVQQAANNALGFITKSLKK), and 2264-2301 (KGLASVLPVLISGLMYGTSDQREQATNTLRTVINHTSA). Residues 2265-2412 (GLASVLPVLI…ISQESKLRAL (148 aa)) form an RWDBD region region. The stretch at 2326 to 2348 (QVKSAILQTLSLLISKSPASMKI) is one HEAT 37; degenerate repeat. The HEAT 38; degenerate repeat unit spans residues 2349–2385 (FLHQLQPTFIKCLSDSHKNVRTNAASALGLLMTLSSS). HEAT repeat units lie at residues 2387–2421 (DQLVNSLITGISTADSISQESKLRALQSIFEKKPK), 2425–2462 (ATLDKAIATIVDFLYQPSDDLRSMVAQTIGASSKCFTS), 2508–2545 (PNMPTIIKIIQTDCRDEKGPIRESSAYLAEAILVASPL), and 2546–2583 (TYAKDLVPSICHLIGDQSSSVSISALNVIKRFCKSNQQ).

It belongs to the GCN1 family. In terms of assembly, interacts with eif2ak4/gcn2; this interaction stimulates the eif2ak4/gcn2 kinase activity and is impaired by impact upon a variety of stress conditions, such as amino acid depletion, UV-C irradiation, proteasome inhibitor treatment and glucose deprivation. Interacts with impact; this prevents the interaction of gcn1 with eif2ak4/gcn2 and inhibits eif2ak4/gcn2 kinase activity.

It is found in the cytoplasm. In terms of biological role, ribosome collision sensor that activates a translation quality control pathway when a ribosome has stalled during translation. Directly binds to the ribosome and acts as a sentinel for colliding ribosomes. Gcn1 also acts as a positive activator of the integrated stress response (ISR) by mediating activation of eif2ak4/gcn2 in response to amino acid starvation. Interaction with eif2ak4/gcn2 on translating ribosomes stimulates eif2ak4/gcn2 kinase activity, leading to phosphorylation of eukaryotic translation initiation factor 2 (eIF-2-alpha/eif2s1). EIF2S1/eIF-2-alpha phosphorylation converts EIF2S1/eIF-2-alpha into a global protein synthesis inhibitor, leading to a global attenuation of cap-dependent translation, and thus to a reduced overall utilization of amino acids, while concomitantly initiating the preferential translation of ISR-specific mRNAs, such as the transcriptional activator atf4, and hence allowing atf4-mediated reprogramming of amino acid biosynthetic gene expression to alleviate nutrient depletion. This is eIF-2-alpha kinase activator GCN1 from Dictyostelium discoideum (Social amoeba).